A 428-amino-acid chain; its full sequence is Enolase (428 aa).

Gln-163 lines the (2R)-2-phosphoglycerate pocket. Residue Glu-205 is the Proton donor of the active site. Positions 242, 286, and 313 each coordinate Mg(2+). Residues Lys-338, Arg-367, Ser-368, and Lys-389 each coordinate (2R)-2-phosphoglycerate. Lys-338 (proton acceptor) is an active-site residue.

It belongs to the enolase family. Requires Mg(2+) as cofactor.

It is found in the cytoplasm. Its subcellular location is the secreted. It localises to the cell surface. It catalyses the reaction (2R)-2-phosphoglycerate = phosphoenolpyruvate + H2O. It functions in the pathway carbohydrate degradation; glycolysis; pyruvate from D-glyceraldehyde 3-phosphate: step 4/5. In terms of biological role, catalyzes the reversible conversion of 2-phosphoglycerate (2-PG) into phosphoenolpyruvate (PEP). It is essential for the degradation of carbohydrates via glycolysis. The chain is Enolase from Lactobacillus helveticus (strain DPC 4571).